Here is a 1105-residue protein sequence, read N- to C-terminus: AP-3 complex subunit beta-1 (1105 aa).

Disordered stretches follow at residues 1–26 and 271–292; these read MSSN…EATS and KNFY…KKSY. Phosphoserine occurs at positions 276 and 610. The interval 668-824 is disordered; sequence KKEKPMKKFY…KPQQERHPPS (157 aa). A compositionally biased stretch (acidic residues) spans 679–704; sequence ESEEEEDEDEDEDEEEEEKEDEDENP. 2 stretches are compositionally biased toward low complexity: residues 705–722 and 730–741; these read SDSS…SGDT and DSSSGQDSETGS. Residues 750-759 show a composition bias toward basic residues; it reads VAKRNSKTKR. Residues 760-774 show a composition bias toward basic and acidic residues; that stretch reads KSDSENREKKNENSK. Ser-761 and Ser-763 each carry phosphoserine. Positions 775-788 are enriched in low complexity; that stretch reads ASESSSEESSSMED. Over residues 789-799 the composition is skewed to acidic residues; it reads SSSESESESGS. Residues 811 to 824 are compositionally biased toward basic and acidic residues; sequence AKERKPQQERHPPS.

This sequence belongs to the adaptor complexes large subunit family. In terms of assembly, adaptor protein complex 3 (AP-3) is a heterotetramer composed of two large adaptins (delta-type subunit AP3D1 and beta-type subunit AP3B1 or AP3B2), a medium adaptin (mu-type subunit AP3M1 or AP3M2) and a small adaptin (sigma-type subunit APS1 or AP3S2). AP-3 associates with the BLOC-1 complex. Interacts with KIF3A; interaction is direct; interaction is impaired by pyrophosphorylation of AP3B1. Phosphorylated on serine residues. In terms of processing, pyrophosphorylated by 5-diphosphoinositol pentakisphosphate (5-IP7). Pyrophosphorylation impairs interaction with KIF3A. Serine pyrophosphorylation is achieved by Mg(2+)-dependent, but enzyme independent transfer of a beta-phosphate from a inositol pyrophosphate to a pre-phosphorylated serine residue. As to expression, ubiquitously expressed.

The protein resides in the cytoplasmic vesicle. Its subcellular location is the clathrin-coated vesicle membrane. It is found in the golgi apparatus. Its function is as follows. Subunit of non-clathrin- and clathrin-associated adaptor protein complex 3 (AP-3) that plays a role in protein sorting in the late-Golgi/trans-Golgi network (TGN) and/or endosomes. The AP complexes mediate both the recruitment of clathrin to membranes and the recognition of sorting signals within the cytosolic tails of transmembrane cargo molecules. AP-3 appears to be involved in the sorting of a subset of transmembrane proteins targeted to lysosomes and lysosome-related organelles. In concert with the BLOC-1 complex, AP-3 is required to target cargos into vesicles assembled at cell bodies for delivery into neurites and nerve terminals. The chain is AP-3 complex subunit beta-1 (Ap3b1) from Mus musculus (Mouse).